The chain runs to 442 residues: Elongation factor 1-gamma (442 aa).

The GST N-terminal domain maps to 2-87 (AAGTLYTYPE…FLSNDALRGS (86 aa)). In terms of domain architecture, GST C-terminal spans 88-216 (TPQASAQVLQ…VKLCEKMAQF (129 aa)). 2 stretches are compositionally biased toward basic and acidic residues: residues 224–242 (MQPKKEAPAKKEKAGKEGG) and 249–263 (QEKKEKKKEEKKAAP). Residues 224 to 273 (MQPKKEAPAKKEKAGKEGGKQQQPQQEKKEKKKEEKKAAPAEEEMDECEA) are disordered. The region spanning 281–442 (AKDPYAHLPK…KSFNQGKIFK (162 aa)) is the EF-1-gamma C-terminal domain.

As to quaternary structure, EF-1 is composed of four subunits: alpha, beta, delta, and gamma.

In terms of biological role, probably plays a role in anchoring the complex to other cellular components. The polypeptide is Elongation factor 1-gamma (eef1g) (Carassius auratus (Goldfish)).